The following is a 408-amino-acid chain: UDP-N-acetylglucosamine--N-acetylmuramyl-(pentapeptide) pyrophosphoryl-undecaprenol N-acetylglucosamine transferase (408 aa).

The segment at 1–20 (MNDTVKKPTGGRGDDPLPAG) is disordered. UDP-N-acetyl-alpha-D-glucosamine-binding positions include 41–43 (TAG), Asn160, Arg197, Ser231, and Gln327.

This sequence belongs to the glycosyltransferase 28 family. MurG subfamily.

Its subcellular location is the cell membrane. It catalyses the reaction di-trans,octa-cis-undecaprenyl diphospho-N-acetyl-alpha-D-muramoyl-L-alanyl-D-glutamyl-meso-2,6-diaminopimeloyl-D-alanyl-D-alanine + UDP-N-acetyl-alpha-D-glucosamine = di-trans,octa-cis-undecaprenyl diphospho-[N-acetyl-alpha-D-glucosaminyl-(1-&gt;4)]-N-acetyl-alpha-D-muramoyl-L-alanyl-D-glutamyl-meso-2,6-diaminopimeloyl-D-alanyl-D-alanine + UDP + H(+). Its pathway is cell wall biogenesis; peptidoglycan biosynthesis. Functionally, cell wall formation. Catalyzes the transfer of a GlcNAc subunit on undecaprenyl-pyrophosphoryl-MurNAc-pentapeptide (lipid intermediate I) to form undecaprenyl-pyrophosphoryl-MurNAc-(pentapeptide)GlcNAc (lipid intermediate II). The polypeptide is UDP-N-acetylglucosamine--N-acetylmuramyl-(pentapeptide) pyrophosphoryl-undecaprenol N-acetylglucosamine transferase (Mycobacterium avium (strain 104)).